A 949-amino-acid chain; its full sequence is Glycine dehydrogenase (decarboxylating) (949 aa).

Position 699 is an N6-(pyridoxal phosphate)lysine (Lys699).

Belongs to the GcvP family. In terms of assembly, the glycine cleavage system is composed of four proteins: P, T, L and H. Requires pyridoxal 5'-phosphate as cofactor.

It catalyses the reaction N(6)-[(R)-lipoyl]-L-lysyl-[glycine-cleavage complex H protein] + glycine + H(+) = N(6)-[(R)-S(8)-aminomethyldihydrolipoyl]-L-lysyl-[glycine-cleavage complex H protein] + CO2. Its function is as follows. The glycine cleavage system catalyzes the degradation of glycine. The P protein binds the alpha-amino group of glycine through its pyridoxal phosphate cofactor; CO(2) is released and the remaining methylamine moiety is then transferred to the lipoamide cofactor of the H protein. This chain is Glycine dehydrogenase (decarboxylating), found in Roseobacter denitrificans (strain ATCC 33942 / OCh 114) (Erythrobacter sp. (strain OCh 114)).